The chain runs to 87 residues: Small ribosomal subunit protein uS17 (87 aa).

Belongs to the universal ribosomal protein uS17 family. Part of the 30S ribosomal subunit.

Functionally, one of the primary rRNA binding proteins, it binds specifically to the 5'-end of 16S ribosomal RNA. The sequence is that of Small ribosomal subunit protein uS17 from Alkalilimnicola ehrlichii (strain ATCC BAA-1101 / DSM 17681 / MLHE-1).